Here is a 76-residue protein sequence, read N- to C-terminus: Dermaseptin-H1 (76 aa).

Positions 1 to 22 (MDILKKSLFIVLFLGLVSLSIC) are cleaved as a signal peptide. Residues 23 to 45 (EEEKRENEDEEEQEDDEQSEEKR) constitute a propeptide that is removed on maturation. The segment at 25–44 (EKRENEDEEEQEDDEQSEEK) is disordered. Residues 30–41 (EDEEEQEDDEQS) show a composition bias toward acidic residues. The residue at position 73 (Gln73) is a Glutamine amide. A propeptide spanning residues 75 to 76 (EQ) is cleaved from the precursor.

As to expression, expressed by the skin glands.

Its subcellular location is the secreted. Has antimicrobial activity. The protein is Dermaseptin-H1 of Pithecopus hypochondrialis (Orange-legged leaf frog).